Reading from the N-terminus, the 156-residue chain is MNVIEGVVAAPDARVAIAIARFNHFINDSLLNGAVDALKRIGQVKDENITVVWVPGAYELPLAVSALADSKNYDAVVALGTVIRGGTAHFEFVAGECSSGLSAVAARAALPVAFGVLTTESIEQAIERAGTKAGNKGAEAALTALEMIKVLQAIKA.

5-amino-6-(D-ribitylamino)uracil-binding positions include F22, 57-59 (AYE), and 81-83 (TVI). 86–87 (GT) lines the (2S)-2-hydroxy-3-oxobutyl phosphate pocket. Residue H89 is the Proton donor of the active site. F114 provides a ligand contact to 5-amino-6-(D-ribitylamino)uracil. (2S)-2-hydroxy-3-oxobutyl phosphate is bound at residue R128.

The protein belongs to the DMRL synthase family. Forms an icosahedral capsid composed of 60 subunits, arranged as a dodecamer of pentamers.

The enzyme catalyses (2S)-2-hydroxy-3-oxobutyl phosphate + 5-amino-6-(D-ribitylamino)uracil = 6,7-dimethyl-8-(1-D-ribityl)lumazine + phosphate + 2 H2O + H(+). The protein operates within cofactor biosynthesis; riboflavin biosynthesis; riboflavin from 2-hydroxy-3-oxobutyl phosphate and 5-amino-6-(D-ribitylamino)uracil: step 1/2. In terms of biological role, catalyzes the formation of 6,7-dimethyl-8-ribityllumazine by condensation of 5-amino-6-(D-ribitylamino)uracil with 3,4-dihydroxy-2-butanone 4-phosphate. This is the penultimate step in the biosynthesis of riboflavin. The chain is 6,7-dimethyl-8-ribityllumazine synthase from Sodalis glossinidius (strain morsitans).